We begin with the raw amino-acid sequence, 1113 residues long: Tudor domain-containing protein 7 (1113 aa).

2 consecutive HTH OST-type domains span residues 3-76 (EADL…YAVA) and 249-318 (KMDE…YPAK). The span at 320–334 (EQPLRSDQDPEKERP) shows a compositional bias: basic and acidic residues. The segment at 320-352 (EQPLRSDQDPEKERPPPPPAPRQEVPSKGSPAV) is disordered. In terms of domain architecture, HTH OST-type 3 spans 352 to 421 (VMPDVKEKVA…TQKAILYAKL (70 aa)). Tudor domains lie at 528–585 (TVHV…FCSL) and 718–775 (LPFC…FLQE). Residues 873 to 895 (SSPGNRNASTPAPGSPAESLRKS) form a disordered region. Serine 874 is modified (phosphoserine). The segment covering 875–884 (PGNRNASTPA) has biased composition (polar residues). An interaction with CDK17 region spans residues 876–1113 (GNRNASTPAP…QYLVELSKAN (238 aa)). Residues 908–1113 (TSSFSLEELP…QYLVELSKAN (206 aa)) are interaction with CABLES1.

It belongs to the TDRD7 family. Found in a mRNP complex, at least composed of TDRD1, TDRD6, TDRD7 and DDX4. Found in a complex containing CABLES1, CDK16 and CDK17. Interacts with CABLES1, CDK17 and PIWIL1. In terms of tissue distribution, expressed in brain and testis.

The protein localises to the cytoplasm. Component of specific cytoplasmic RNA granules involved in post-transcriptional regulation of specific genes: probably acts by binding to specific mRNAs and regulating their translation. Required for lens transparency during lens development, by regulating translation of genes such as CRYBB3 and HSPB1 in the developing lens. Also required during spermatogenesis. This Rattus norvegicus (Rat) protein is Tudor domain-containing protein 7 (Tdrd7).